A 278-amino-acid chain; its full sequence is tRNA (guanine-N(7)-)-methyltransferase (278 aa).

A disordered region spans residues 1 to 42 (MRHDGPMHVQPGVGLQSDTSSSTGTGSGPADEPEAEKSAWGY). Positions 106, 131, 160, and 183 each coordinate S-adenosyl-L-methionine. Aspartate 183 is an active-site residue. Substrate contacts are provided by residues lysine 187, aspartate 219, and 256 to 259 (TKYE).

This sequence belongs to the class I-like SAM-binding methyltransferase superfamily. TrmB family.

The enzyme catalyses guanosine(46) in tRNA + S-adenosyl-L-methionine = N(7)-methylguanosine(46) in tRNA + S-adenosyl-L-homocysteine. It functions in the pathway tRNA modification; N(7)-methylguanine-tRNA biosynthesis. Catalyzes the formation of N(7)-methylguanine at position 46 (m7G46) in tRNA. The chain is tRNA (guanine-N(7)-)-methyltransferase from Mycobacterium ulcerans (strain Agy99).